Here is a 434-residue protein sequence, read N- to C-terminus: Alpha-enolase (434 aa).

Residue Ser-40 participates in Mg(2+) binding. Substrate-binding residues include His-158 and Glu-167. The Proton donor role is filled by Glu-210. Asp-245, Glu-293, and Asp-318 together coordinate Mg(2+). Residues Glu-293 and Asp-318 each contribute to the substrate site. The active-site Proton acceptor is the Lys-343. Substrate-binding positions include 370–373 and Lys-394; that span reads SHRS.

It belongs to the enolase family. Homodimer. Requires Mg(2+) as cofactor.

The protein localises to the cytoplasm. It catalyses the reaction (2R)-2-phosphoglycerate = phosphoenolpyruvate + H2O. It functions in the pathway carbohydrate degradation; glycolysis; pyruvate from D-glyceraldehyde 3-phosphate: step 4/5. The chain is Alpha-enolase from Sceloporus undulatus (Eastern fence lizard).